The chain runs to 433 residues: Trigger factor (433 aa).

A PPIase FKBP-type domain is found at 161–246 (DSRVTIDFIG…LHKVEAQELP (86 aa)).

This sequence belongs to the FKBP-type PPIase family. Tig subfamily.

The protein localises to the cytoplasm. The enzyme catalyses [protein]-peptidylproline (omega=180) = [protein]-peptidylproline (omega=0). Functionally, involved in protein export. Acts as a chaperone by maintaining the newly synthesized protein in an open conformation. Functions as a peptidyl-prolyl cis-trans isomerase. In Photobacterium profundum (strain SS9), this protein is Trigger factor.